An 879-amino-acid chain; its full sequence is Metabotropic glutamate receptor 3 (879 aa).

The signal sequence occupies residues 1–22; that stretch reads MKMLTRLQILMLALFSKGFLLS. Residues 23-576 are Extracellular-facing; sequence LGDHNFMRRE…EDYIKWEDAW (554 aa). A disulfide bridge links cysteine 57 with cysteine 99. L-glutamate is bound by residues arginine 68, serine 151, and 172–174; that span reads AST. Residue asparagine 209 is glycosylated (N-linked (GlcNAc...) asparagine). Tyrosine 222 provides a ligand contact to L-glutamate. Cystine bridges form between cysteine 240/cysteine 527, cysteine 361/cysteine 373, cysteine 412/cysteine 419, cysteine 509/cysteine 528, cysteine 513/cysteine 531, cysteine 534/cysteine 546, and cysteine 549/cysteine 562. Asparagine 292 carries an N-linked (GlcNAc...) asparagine glycan. Aspartate 301 is a binding site for L-glutamate. Position 389 (lysine 389) interacts with L-glutamate. Asparagine 414 and asparagine 439 each carry an N-linked (GlcNAc...) asparagine glycan. A helical membrane pass occupies residues 577-599; the sequence is AIGPVTIACLGFLCTCIVITVFI. Over 600–613 the chain is Cytoplasmic; it reads KHNNTPLVKASGRE. The chain crosses the membrane as a helical span at residues 614–634; sequence LCYILLFGVSLSYCMTFFFIA. Residues 635–645 are Extracellular-facing; sequence KPSPVICALRR. The chain crosses the membrane as a helical span at residues 646 to 664; the sequence is LGLGTSFAICYSALLTKTN. Residues 665–688 lie on the Cytoplasmic side of the membrane; the sequence is CIARIFDGVKNGAQRPKFISPSSQ. The helical transmembrane segment at 689–709 threads the bilayer; it reads VFICLGLILVQIVMVSVWLIL. Residues 710-734 lie on the Extracellular side of the membrane; it reads ETPGTRRYTLPEKRETVILKCNVKD. The chain crosses the membrane as a helical span at residues 735-756; the sequence is SSMLISLTYDVVLVILCTVYAF. At 757–769 the chain is on the cytoplasmic side; it reads KTRKCPENFNEAK. The helical transmembrane segment at 770-792 threads the bilayer; sequence FIGFTMYTTCIIWLAFLPIFYVT. The Extracellular segment spans residues 793–802; the sequence is SSDYRVQTTT. Residues 803–828 traverse the membrane as a helical segment; that stretch reads MCISVSLSGFVVLGCLFAPKVHIVLF. The Cytoplasmic segment spans residues 829–879; sequence QPQKNVVTHRLHLNRFSVSGTATTYSQSSASTYVPTVCNGREVLDSTTSSL.

The protein belongs to the G-protein coupled receptor 3 family. In terms of assembly, interacts with TAMALIN. Is widely distributed in the CNS. Predominant expression is seen in the neuronal cells of the cerebral cortex, dentate gyrus, and glial cells throughout brain regions.

It is found in the cell membrane. Its function is as follows. G-protein coupled receptor for glutamate. Ligand binding causes a conformation change that triggers signaling via guanine nucleotide-binding proteins (G proteins) and modulates the activity of down-stream effectors. Signaling inhibits adenylate cyclase activity. This chain is Metabotropic glutamate receptor 3 (Grm3), found in Rattus norvegicus (Rat).